The sequence spans 136 residues: Large-conductance mechanosensitive channel (136 aa).

2 helical membrane-spanning segments follow: residues 9-29 and 79-99; these read AFAS…GAAF and IQTV…LKAI.

This sequence belongs to the MscL family. As to quaternary structure, homopentamer.

It localises to the cell inner membrane. Functionally, channel that opens in response to stretch forces in the membrane lipid bilayer. May participate in the regulation of osmotic pressure changes within the cell. The chain is Large-conductance mechanosensitive channel from Shewanella putrefaciens (strain CN-32 / ATCC BAA-453).